A 442-amino-acid chain; its full sequence is Tol-Pal system protein TolB (442 aa).

An N-terminal signal peptide occupies residues Met-1–Ala-26.

This sequence belongs to the TolB family. In terms of assembly, the Tol-Pal system is composed of five core proteins: the inner membrane proteins TolA, TolQ and TolR, the periplasmic protein TolB and the outer membrane protein Pal. They form a network linking the inner and outer membranes and the peptidoglycan layer.

The protein resides in the periplasm. Its function is as follows. Part of the Tol-Pal system, which plays a role in outer membrane invagination during cell division and is important for maintaining outer membrane integrity. This chain is Tol-Pal system protein TolB, found in Nitratidesulfovibrio vulgaris (strain ATCC 29579 / DSM 644 / CCUG 34227 / NCIMB 8303 / VKM B-1760 / Hildenborough) (Desulfovibrio vulgaris).